A 512-amino-acid polypeptide reads, in one-letter code: Tabersonine 16-hydroxylase 2 (512 aa).

Position 1 (Met-1) is a topological domain, lumenal. A helical transmembrane segment spans residues 2–22 (ELYYFSTFAFLLFCFILAKTL). The Cytoplasmic portion of the chain corresponds to 23–512 (KKSGQSNLKL…YSASSLKGKY (490 aa)). Cys-445 is a heme binding site.

It belongs to the cytochrome P450 family. Requires heme as cofactor. Expressed at low levels in roots, fruits, stems, flower buds and flowers, but highly expressed in young leaves. Detected in adaxial and abaxial epidermis cells.

The protein resides in the endoplasmic reticulum membrane. It carries out the reaction (-)-tabersonine + reduced [NADPH--hemoprotein reductase] + O2 = 16-hydroxytabersonine + oxidized [NADPH--hemoprotein reductase] + H2O + H(+). Functionally, involved in the foliar biosynthesis of vindoline, a precursor of vinblastine and vincristine. Hydroxylates specifically tabersonine, 2,3-dihydrotabersonine and 2,3-dihydro-3-hydroxytabersonine, but has no activity with naringenin, tryptamine, secologanin, strictosidine, ajmalicine, vindoline and catharanthine. The chain is Tabersonine 16-hydroxylase 2 from Catharanthus roseus (Madagascar periwinkle).